The chain runs to 194 residues: tRNA (mnm(5)s(2)U34)-methyltransferase (194 aa).

Positions 33, 34, 52, 54, 79, and 80 each coordinate S-adenosyl-L-methionine.

The protein belongs to the methyltransferase superfamily. MnmM family. As to quaternary structure, homodimer.

It catalyses the reaction 5-aminomethyl-2-thiouridine(34) in tRNA + S-adenosyl-L-methionine = 5-methylaminomethyl-2-thiouridine(34) in tRNA + S-adenosyl-L-homocysteine + H(+). It functions in the pathway tRNA modification. Functionally, involved in the biosynthesis of 5-methylaminomethyl-2-thiouridine (mnm(5)s(2)U) at the wobble position (U34) in tRNA. Catalyzes the transfer of a methyl group from S-adenosyl-L-methionine to nm(5)s(2)U34 to form mnm(5)s(2)U34. This Bacillus subtilis (strain 168) protein is tRNA (mnm(5)s(2)U34)-methyltransferase.